The following is a 538-amino-acid chain: CTP synthase (538 aa).

Positions 1–265 (MARYIFVTGG…DLQVLNYFKL (265 aa)) are amidoligase domain. Ser-13 contacts CTP. Ser-13 contacts UTP. ATP contacts are provided by residues 14–19 (SLGKGL) and Asp-71. Asp-71 and Glu-139 together coordinate Mg(2+). CTP-binding positions include 146–148 (DIE), 186–191 (KTKPTQ), and Lys-222. UTP is bound by residues 186-191 (KTKPTQ) and Lys-222. The region spanning 291–538 (NIAIIGKYVE…SFIKAAKNHK (248 aa)) is the Glutamine amidotransferase type-1 domain. Gly-353 serves as a coordination point for L-glutamine. Cys-380 serves as the catalytic Nucleophile; for glutamine hydrolysis. Residues 381–384 (YGMQ), Glu-404, and Arg-468 contribute to the L-glutamine site. Active-site residues include His-513 and Glu-515.

The protein belongs to the CTP synthase family. In terms of assembly, homotetramer.

The enzyme catalyses UTP + L-glutamine + ATP + H2O = CTP + L-glutamate + ADP + phosphate + 2 H(+). The catalysed reaction is L-glutamine + H2O = L-glutamate + NH4(+). It catalyses the reaction UTP + NH4(+) + ATP = CTP + ADP + phosphate + 2 H(+). The protein operates within pyrimidine metabolism; CTP biosynthesis via de novo pathway; CTP from UDP: step 2/2. Its activity is regulated as follows. Allosterically activated by GTP, when glutamine is the substrate; GTP has no effect on the reaction when ammonia is the substrate. The allosteric effector GTP functions by stabilizing the protein conformation that binds the tetrahedral intermediate(s) formed during glutamine hydrolysis. Inhibited by the product CTP, via allosteric rather than competitive inhibition. Its function is as follows. Catalyzes the ATP-dependent amination of UTP to CTP with either L-glutamine or ammonia as the source of nitrogen. Regulates intracellular CTP levels through interactions with the four ribonucleotide triphosphates. The protein is CTP synthase of Pelagibacter ubique (strain HTCC1062).